Here is a 544-residue protein sequence, read N- to C-terminus: CTP synthase (544 aa).

The segment at 1-265 (MTKFIFVTGG…DNIITEQLQL (265 aa)) is amidoligase domain. A CTP-binding site is contributed by Ser13. Residue Ser13 participates in UTP binding. Residues 14-19 (SLGKGI) and Asp71 each bind ATP. Mg(2+)-binding residues include Asp71 and Glu139. CTP contacts are provided by residues 146–148 (DIE), 186–191 (KTKPTQ), and Lys222. Residues 186-191 (KTKPTQ) and Lys222 contribute to the UTP site. Positions 290–544 (KIAMVGKYVD…VKAALNNKKA (255 aa)) constitute a Glutamine amidotransferase type-1 domain. L-glutamine is bound at residue Gly353. Cys380 acts as the Nucleophile; for glutamine hydrolysis in catalysis. L-glutamine-binding positions include 381 to 384 (LGMQ), Glu404, and Arg471. Residues His517 and Glu519 contribute to the active site.

The protein belongs to the CTP synthase family. As to quaternary structure, homotetramer.

It catalyses the reaction UTP + L-glutamine + ATP + H2O = CTP + L-glutamate + ADP + phosphate + 2 H(+). The enzyme catalyses L-glutamine + H2O = L-glutamate + NH4(+). It carries out the reaction UTP + NH4(+) + ATP = CTP + ADP + phosphate + 2 H(+). It functions in the pathway pyrimidine metabolism; CTP biosynthesis via de novo pathway; CTP from UDP: step 2/2. Allosterically activated by GTP, when glutamine is the substrate; GTP has no effect on the reaction when ammonia is the substrate. The allosteric effector GTP functions by stabilizing the protein conformation that binds the tetrahedral intermediate(s) formed during glutamine hydrolysis. Inhibited by the product CTP, via allosteric rather than competitive inhibition. Catalyzes the ATP-dependent amination of UTP to CTP with either L-glutamine or ammonia as the source of nitrogen. Regulates intracellular CTP levels through interactions with the four ribonucleotide triphosphates. The protein is CTP synthase of Neisseria meningitidis serogroup C (strain 053442).